Consider the following 183-residue polypeptide: dCTP deaminase (183 aa).

A dCTP-binding site is contributed by 106 to 111 (KSTYAR). Catalysis depends on Glu-132, which acts as the Proton donor/acceptor. DCTP-binding residues include Gln-151, Tyr-165, and Gln-175.

Belongs to the dCTP deaminase family. As to quaternary structure, homotrimer.

It catalyses the reaction dCTP + H2O + H(+) = dUTP + NH4(+). The protein operates within pyrimidine metabolism; dUMP biosynthesis; dUMP from dCTP (dUTP route): step 1/2. In terms of biological role, catalyzes the deamination of dCTP to dUTP. The protein is dCTP deaminase of Gluconobacter oxydans (strain 621H) (Gluconobacter suboxydans).